A 443-amino-acid polypeptide reads, in one-letter code: Thymidine phosphorylase (443 aa).

The protein belongs to the thymidine/pyrimidine-nucleoside phosphorylase family. As to quaternary structure, homodimer.

The catalysed reaction is thymidine + phosphate = 2-deoxy-alpha-D-ribose 1-phosphate + thymine. Its pathway is pyrimidine metabolism; dTMP biosynthesis via salvage pathway; dTMP from thymine: step 1/2. The enzymes which catalyze the reversible phosphorolysis of pyrimidine nucleosides are involved in the degradation of these compounds and in their utilization as carbon and energy sources, or in the rescue of pyrimidine bases for nucleotide synthesis. This chain is Thymidine phosphorylase, found in Shewanella frigidimarina (strain NCIMB 400).